Reading from the N-terminus, the 451-residue chain is DNA-directed RNA polymerase subunit Rpo1C (451 aa).

The tract at residues 1 to 68 (MQDIIGKIED…DDDELLDAVE (68 aa)) is unknown. Residues 69–451 (DDYQRILKVQ…SVSVVMKERK (383 aa)) form a DNA-directed RNA polymerase subunit Rpo1C region.

The protein belongs to the RNA polymerase beta' chain family. In terms of assembly, part of the RNA polymerase complex.

It localises to the cytoplasm. The enzyme catalyses RNA(n) + a ribonucleoside 5'-triphosphate = RNA(n+1) + diphosphate. DNA-dependent RNA polymerase (RNAP) catalyzes the transcription of DNA into RNA using the four ribonucleoside triphosphates as substrates. Forms part of the jaw domain. This is DNA-directed RNA polymerase subunit Rpo1C from Methanothermobacter thermautotrophicus (strain ATCC 29096 / DSM 1053 / JCM 10044 / NBRC 100330 / Delta H) (Methanobacterium thermoautotrophicum).